A 1767-amino-acid polypeptide reads, in one-letter code: Endo-alpha-N-acetylgalactosaminidase (1767 aa).

Residues 1-39 form the signal peptide; it reads MNKGLFEKRCKYSIRKFSLGVASVMIGAAFFGTSPVLAD. Basic and acidic residues-rich tracts occupy residues 61–75 and 84–111; these read KENDGRDFEAPKVGE and DGPKTEEELLALEKEKPAEEKPKEDKPA. Disordered stretches follow at residues 61–124 and 301–324; these read KEND…VTPE and VKTDNQEGVKTEDTPAEKETGPEV. The span at 112 to 124 shows a compositional bias: low complexity; sequence AAKPETPKTVTPE. Residues 304–324 are compositionally biased toward basic and acidic residues; sequence DNQEGVKTEDTPAEKETGPEV. Ca(2+) is bound by residues D577, N579, D581, N583, and D588. Positions 602 to 893 are catalytic; it reads GWEKVKDITA…DVMTKYFQHF (292 aa). D658 contacts substrate. D764 acts as the Nucleophile in catalysis. Catalysis depends on E796, which acts as the Proton donor/acceptor. Ca(2+) contacts are provided by D1233, E1235, E1281, W1284, and D1411. The segment at 1711–1730 is disordered; sequence LASEQGKTPDYKQEIARPET. Positions 1717–1730 are enriched in basic and acidic residues; that stretch reads KTPDYKQEIARPET. Residues 1735–1739 carry the LPXTG sorting signal motif; sequence LPATG. T1738 bears the Pentaglycyl murein peptidoglycan amidated threonine mark. Residues 1739-1767 constitute a propeptide, removed by sortase; it reads GESQSDTALILASVSLALSALFVVKTKKD.

Belongs to the glycosyl hydrolase 101 family. A subfamily.

Its subcellular location is the secreted. The protein resides in the cell wall. It catalyses the reaction a 3-O-[beta-D-galactosyl-(1-&gt;3)-N-acetyl-alpha-D-galactosaminyl]-L-threonyl-[protein] + H2O = beta-D-galactosyl-(1-&gt;3)-N-acetyl-D-galactosamine + L-threonyl-[protein]. The catalysed reaction is a 3-O-[beta-D-galactosyl-(1-&gt;3)-N-acetyl-alpha-D-galactosaminyl]-L-seryl-[protein] + H2O = beta-D-galactosyl-(1-&gt;3)-N-acetyl-D-galactosamine + L-seryl-[protein]. Involved in the breakdown of mucin-type O-linked glycans. Specifically removes the T-antigen disaccharide (Gal-beta-1,3-GalNAc-alpha) from extracellular host glycoproteins. Representative of a broadly important class of virulence factors. This Streptococcus pneumoniae serotype 4 (strain ATCC BAA-334 / TIGR4) protein is Endo-alpha-N-acetylgalactosaminidase.